The sequence spans 164 residues: Protein-export protein SecB (164 aa).

This sequence belongs to the SecB family. As to quaternary structure, homotetramer, a dimer of dimers. One homotetramer interacts with 1 SecA dimer.

Its subcellular location is the cytoplasm. Its function is as follows. One of the proteins required for the normal export of preproteins out of the cell cytoplasm. It is a molecular chaperone that binds to a subset of precursor proteins, maintaining them in a translocation-competent state. It also specifically binds to its receptor SecA. The chain is Protein-export protein SecB from Pseudomonas syringae pv. tomato (strain ATCC BAA-871 / DC3000).